The primary structure comprises 388 residues: Nesprin-4 (388 aa).

Over 1-339 (MALVPPLGRE…GVPAPASKRP (339 aa)) the chain is Cytoplasmic. Residues 60–92 (ELKSTESATSPSRLPLASSHEHQDGGKPCEHSD) form a disordered region. The segment covering 78 to 92 (SHEHQDGGKPCEHSD) has biased composition (basic and acidic residues). Positions 331–388 (VPAPASKRPLTLFFLLLFLLLVGATLLLPLSGVSCCSHARLARTPYLVLSYVNGLPPI) constitute a KASH domain. A helical; Anchor for type IV membrane protein transmembrane segment spans residues 340–360 (LTLFFLLLFLLLVGATLLLPL). Topologically, residues 361-388 (SGVSCCSHARLARTPYLVLSYVNGLPPI) are perinuclear space.

Belongs to the nesprin family. Core component of LINC complexes which are composed of inner nuclear membrane SUN domain-containing proteins coupled to outer nuclear membrane KASH domain-containing nesprins. SUN and KASH domain-containing proteins seem to bind each other promiscuously; however, differentially expression of LINC complex constituents can give rise to specific assemblies. Probably part of a SUN1-containing LINC complex. Interacts with kinesins KIF5B and KLC1. Post-translationally, the disulfid bond with SUN1 or SUN2 is required for stability of the respective LINC complex under tensile forces. As to expression, expressed in secretory epithelial cells, such as those found in exocrine pancreas, bulbourethral gland, mammary gland and salivary gland (at protein level). Also expressed in the cochlea, where it is restricted primarily to the 3 rows of outer hair cells and 1 row of inner hair cells (at protein level). Not detected in other cells of the cochlea, including Deiter's cells and pillar cells, nor in liver and kidney (at protein level).

It localises to the nucleus outer membrane. In terms of biological role, as a component of the LINC (LInker of Nucleoskeleton and Cytoskeleton) complex, involved in the connection between the nuclear lamina and the cytoskeleton. The nucleocytoplasmic interactions established by the LINC complex play an important role in the transmission of mechanical forces across the nuclear envelope and in nuclear movement and positioning. Behaves as a kinesin cargo, providing a functional binding site for kinesin-1 at the nuclear envelope. Hence may contribute to the establishment of secretory epithelial morphology, by promoting kinesin-dependent apical migration of the centrosome and Golgi apparatus and basal localization of the nucleus. This is Nesprin-4 (Syne4) from Mus musculus (Mouse).